The sequence spans 294 residues: Glyceraldehyde-3-phosphate dehydrogenase (294 aa).

3 residues coordinate NAD(+): D19, K63, and T105. Residues 134-136, T165, 194-195, and R217 contribute to the D-glyceraldehyde 3-phosphate site; these read SCT and TG. C135 acts as the Nucleophile in catalysis.

It belongs to the glyceraldehyde-3-phosphate dehydrogenase family. Homotetramer.

The protein localises to the cytoplasm. It carries out the reaction D-glyceraldehyde 3-phosphate + phosphate + NAD(+) = (2R)-3-phospho-glyceroyl phosphate + NADH + H(+). Its pathway is carbohydrate degradation; glycolysis; pyruvate from D-glyceraldehyde 3-phosphate: step 1/5. Functionally, catalyzes the oxidative phosphorylation of glyceraldehyde 3-phosphate (G3P) to 1,3-bisphosphoglycerate (BPG) using the cofactor NAD. The first reaction step involves the formation of a hemiacetal intermediate between G3P and a cysteine residue, and this hemiacetal intermediate is then oxidized to a thioester, with concomitant reduction of NAD to NADH. The reduced NADH is then exchanged with the second NAD, and the thioester is attacked by a nucleophilic inorganic phosphate to produce BPG. The sequence is that of Glyceraldehyde-3-phosphate dehydrogenase (gap) from Serratia odorifera.